Here is a 215-residue protein sequence, read N- to C-terminus: HTH-type transcriptional repressor FabR (215 aa).

The HTH tetR-type domain maps to 10–70 (KTRRSLVEAA…TMVDESGLML (61 aa)). A DNA-binding region (H-T-H motif) is located at residues 33-52 (SLREVAREAGIAPTSFYRHF).

As to quaternary structure, homodimer.

Its subcellular location is the cytoplasm. Functionally, represses the transcription of fabB, involved in unsaturated fatty acid (UFA) biosynthesis. By controlling UFA production, FabR directly influences the physical properties of the membrane bilayer. The polypeptide is HTH-type transcriptional repressor FabR (Shigella boydii serotype 18 (strain CDC 3083-94 / BS512)).